Consider the following 962-residue polypeptide: Glycine dehydrogenase (decarboxylating) (962 aa).

Residue lysine 709 is modified to N6-(pyridoxal phosphate)lysine.

The protein belongs to the GcvP family. The glycine cleavage system is composed of four proteins: P, T, L and H. Pyridoxal 5'-phosphate is required as a cofactor.

The enzyme catalyses N(6)-[(R)-lipoyl]-L-lysyl-[glycine-cleavage complex H protein] + glycine + H(+) = N(6)-[(R)-S(8)-aminomethyldihydrolipoyl]-L-lysyl-[glycine-cleavage complex H protein] + CO2. Its function is as follows. The glycine cleavage system catalyzes the degradation of glycine. The P protein binds the alpha-amino group of glycine through its pyridoxal phosphate cofactor; CO(2) is released and the remaining methylamine moiety is then transferred to the lipoamide cofactor of the H protein. This Shewanella amazonensis (strain ATCC BAA-1098 / SB2B) protein is Glycine dehydrogenase (decarboxylating).